A 139-amino-acid chain; its full sequence is Translation initiation factor 2 subunit beta (139 aa).

Belongs to the eIF-2-beta/eIF-5 family. Heterotrimer composed of an alpha, a beta and a gamma chain.

Functionally, eIF-2 functions in the early steps of protein synthesis by forming a ternary complex with GTP and initiator tRNA. This is Translation initiation factor 2 subunit beta from Sulfurisphaera tokodaii (strain DSM 16993 / JCM 10545 / NBRC 100140 / 7) (Sulfolobus tokodaii).